The chain runs to 272 residues: Oligodendrocyte transcription factor 3 (272 aa).

The span at methionine 1–serine 14 shows a compositional bias: low complexity. Residues methionine 1 to lysine 71 are disordered. A compositionally biased stretch (basic residues) spans aspartate 24 to glutamine 33. Residues arginine 36–aspartate 46 are compositionally biased toward polar residues. Positions serine 68–asparagine 89 form a coiled coil. The bHLH domain occupies glutamine 83–leucine 137.

It localises to the nucleus. Its function is as follows. May determine the distinct specification program of class A neurons in the dorsal part of the spinal cord and suppress specification of class B neurons. This chain is Oligodendrocyte transcription factor 3 (OLIG3), found in Homo sapiens (Human).